A 375-amino-acid chain; its full sequence is 23S rRNA (uracil(747)-C(5))-methyltransferase RlmC (375 aa).

[4Fe-4S] cluster-binding residues include Cys3, Cys11, Cys14, and Cys87. S-adenosyl-L-methionine-binding residues include Gln212, Phe241, Glu262, and Asn307. The Nucleophile role is filled by Cys334.

This sequence belongs to the class I-like SAM-binding methyltransferase superfamily. RNA M5U methyltransferase family. RlmC subfamily.

It catalyses the reaction uridine(747) in 23S rRNA + S-adenosyl-L-methionine = 5-methyluridine(747) in 23S rRNA + S-adenosyl-L-homocysteine + H(+). Its function is as follows. Catalyzes the formation of 5-methyl-uridine at position 747 (m5U747) in 23S rRNA. The chain is 23S rRNA (uracil(747)-C(5))-methyltransferase RlmC from Escherichia coli O127:H6 (strain E2348/69 / EPEC).